A 190-amino-acid chain; its full sequence is Probable chemoreceptor glutamine deamidase CheD (190 aa).

The protein belongs to the CheD family.

The catalysed reaction is L-glutaminyl-[protein] + H2O = L-glutamyl-[protein] + NH4(+). In terms of biological role, probably deamidates glutamine residues to glutamate on methyl-accepting chemotaxis receptors (MCPs), playing an important role in chemotaxis. In Acidiphilium cryptum (strain JF-5), this protein is Probable chemoreceptor glutamine deamidase CheD.